We begin with the raw amino-acid sequence, 537 residues long: Glucose-6-phosphate isomerase (537 aa).

Residue glutamate 355 is the Proton donor of the active site. Catalysis depends on residues histidine 386 and lysine 501.

This sequence belongs to the GPI family.

The protein localises to the cytoplasm. The enzyme catalyses alpha-D-glucose 6-phosphate = beta-D-fructose 6-phosphate. It functions in the pathway carbohydrate biosynthesis; gluconeogenesis. The protein operates within carbohydrate degradation; glycolysis; D-glyceraldehyde 3-phosphate and glycerone phosphate from D-glucose: step 2/4. Its function is as follows. Catalyzes the reversible isomerization of glucose-6-phosphate to fructose-6-phosphate. In Protochlamydia amoebophila (strain UWE25), this protein is Glucose-6-phosphate isomerase.